The sequence spans 429 residues: Probable exoglucanase GH6D (429 aa).

The first 17 residues, 1–17 (MRAVYAILAGLLATGSA), serve as a signal peptide directing secretion. Residues W75 and S77 each coordinate substrate. Catalysis depends on proton donor residues D115 and D162. 2 residues coordinate substrate: N206 and W209. N237 is a glycosylation site (N-linked (GlcNAc...) asparagine). The substrate site is built by N240, W300, K328, and E332. The disordered stretch occupies residues 240–261 (NYNPYSTNNPPPYTAGSPSADE). Residues 362–390 (PEIRADGGGGGSPAPGPSSTAVAPSPSAT) form a disordered region. Residues 378 to 390 (PSSTAVAPSPSAT) are compositionally biased toward low complexity. Positions 394-429 (NCAARWAQCGGQGWTGPTCCAQGTCQASNQWYSQCL) constitute a CBM1 domain.

It belongs to the glycosyl hydrolase 6 (cellulase B) family.

Its subcellular location is the secreted. Probable exoglucanase that may play an important function in biomass degradation by catalyzing the hydrolysis of cellulose. The protein is Probable exoglucanase GH6D of Podospora anserina (strain S / ATCC MYA-4624 / DSM 980 / FGSC 10383) (Pleurage anserina).